Consider the following 224-residue polypeptide: Pyridoxal 5'-phosphate synthase subunit PdxT (224 aa).

Residue 55–57 coordinates L-glutamine; sequence GES. The Nucleophile role is filled by C87. L-glutamine contacts are provided by residues R113 and 142-143; that span reads IR. Active-site charge relay system residues include H178 and E180.

It belongs to the glutaminase PdxT/SNO family. In terms of assembly, in the presence of PdxS, forms a dodecamer of heterodimers. Only shows activity in the heterodimer.

It carries out the reaction aldehydo-D-ribose 5-phosphate + D-glyceraldehyde 3-phosphate + L-glutamine = pyridoxal 5'-phosphate + L-glutamate + phosphate + 3 H2O + H(+). The catalysed reaction is L-glutamine + H2O = L-glutamate + NH4(+). It participates in cofactor biosynthesis; pyridoxal 5'-phosphate biosynthesis. Catalyzes the hydrolysis of glutamine to glutamate and ammonia as part of the biosynthesis of pyridoxal 5'-phosphate. The resulting ammonia molecule is channeled to the active site of PdxS. This Syntrophus aciditrophicus (strain SB) protein is Pyridoxal 5'-phosphate synthase subunit PdxT.